Here is a 36-residue protein sequence, read N- to C-terminus: Mu/kappa-theraphotoxin-Ap1a (36 aa).

Intrachain disulfides connect C3-C18, C10-C23, and C17-C30. F36 carries the post-translational modification Phenylalanine amide.

Belongs to the neurotoxin 10 (Hwtx-1) family. Expressed by the venom gland.

The protein resides in the secreted. Inhibitor of voltage-gated potassium and sodium channels. Among other potassium channels, it selectively inhibits Kv10.1/KCNH1/EAG1 (IC(50)=236 nM) by shifting the voltage dependence of channel activation in a depolarising direction, it shows a maximum inhibition of 80% at saturating concentrations, it shows fast on-rates, and is poorly reversible. It also slightly affects channel inactivation, when the membrane is highly depolarised (&gt;+80 mV). It shows similar potency on Nav1.7/SCN9A (IC(50)=222 nM) and lower potency on Nav1.2/SCN2A (IC(50)=519 nM). This Avicularia purpurea (Ecuadorian purple pinktoe tarantula) protein is Mu/kappa-theraphotoxin-Ap1a.